A 477-amino-acid chain; its full sequence is Aspartyl/glutamyl-tRNA(Asn/Gln) amidotransferase subunit B (477 aa).

Belongs to the GatB/GatE family. GatB subfamily. As to quaternary structure, heterotrimer of A, B and C subunits.

It carries out the reaction L-glutamyl-tRNA(Gln) + L-glutamine + ATP + H2O = L-glutaminyl-tRNA(Gln) + L-glutamate + ADP + phosphate + H(+). The enzyme catalyses L-aspartyl-tRNA(Asn) + L-glutamine + ATP + H2O = L-asparaginyl-tRNA(Asn) + L-glutamate + ADP + phosphate + 2 H(+). Functionally, allows the formation of correctly charged Asn-tRNA(Asn) or Gln-tRNA(Gln) through the transamidation of misacylated Asp-tRNA(Asn) or Glu-tRNA(Gln) in organisms which lack either or both of asparaginyl-tRNA or glutaminyl-tRNA synthetases. The reaction takes place in the presence of glutamine and ATP through an activated phospho-Asp-tRNA(Asn) or phospho-Glu-tRNA(Gln). This chain is Aspartyl/glutamyl-tRNA(Asn/Gln) amidotransferase subunit B, found in Streptococcus sanguinis (strain SK36).